Reading from the N-terminus, the 320-residue chain is Ribosome biogenesis protein BRX1 homolog 2 (320 aa).

Positions 1–40 (MGRKRKHSETEAPAPVKKSDEPAPDRPKRTLLGWKDKSEG) are disordered. The span at 17–40 (KKSDEPAPDRPKRTLLGWKDKSEG) shows a compositional bias: basic and acidic residues. The 204-residue stretch at 57–260 (EKVLVTCSRR…PIKIFAGSFG (204 aa)) folds into the Brix domain. The disordered stretch occupies residues 297-320 (RKKMHELSNPLEPDEFADMWKDDE). Positions 308–320 (EPDEFADMWKDDE) are enriched in acidic residues.

This sequence belongs to the BRX1 family. In terms of tissue distribution, expressed in roots, rosette leaves, stems, flowers, siliques and seeds.

The protein localises to the nucleus. The protein resides in the nucleolus. Functionally, involved in pre-rRNA processing and required for biogenesis of the large (60S) ribosomal subunit. Required for proper development. The polypeptide is Ribosome biogenesis protein BRX1 homolog 2 (Arabidopsis thaliana (Mouse-ear cress)).